Here is a 530-residue protein sequence, read N- to C-terminus: PC4 and SFRS1-interacting protein (530 aa).

Positions 1–64 (MTRDFKPGDL…PKDIFPYSEN (64 aa)) constitute a PWWP domain. K75 participates in a covalent cross-link: Glycyl lysine isopeptide (Lys-Gly) (interchain with G-Cter in SUMO2). Residues 86–349 (NNPKVKFSSQ…VEKKRETSMD (264 aa)) form a disordered region. Residues 92 to 104 (FSSQQASTKQSNA) show a composition bias toward polar residues. Phosphoserine is present on residues S102, S105, and S106. Residues 113–135 (KETSVSKEDTDHEEKASNEDVTK) are compositionally biased toward basic and acidic residues. T115 and T122 each carry phosphothreonine. Position 129 is a phosphoserine (S129). Phosphothreonine is present on T141. The segment covering 144–153 (AARRGRKRKA) has biased composition (basic residues). The short motif at 146–156 (RRGRKRKAEKQ) is the Nuclear localization signal element. Residue T167 is modified to Phosphothreonine. 2 positions are modified to phosphoserine: S177 and S206. The segment covering 213–261 (EEDKSKKKGQEEKQPKKQLKKDEEGQKEEDKPRKEPDKKEGKKEVESKR) has biased composition (basic and acidic residues). At S271 the chain carries Phosphoserine. T272 carries the phosphothreonine modification. Phosphoserine is present on residues S273 and S275. Residues 274–283 (DSEEEGDDQE) show a composition bias toward acidic residues. Residues 287 to 302 (KRKGGRNFQTAHRRNM) show a composition bias toward basic residues. The segment covering 305–349 (GQHEKEAADRKRKQEEQMETEQQNKDEGKKPEVKKVEKKRETSMD) has biased composition (basic and acidic residues). Coiled-coil stretches lie at residues 306–334 (QHEK…EGKK) and 371–395 (NRCI…KHTE). The tract at residues 340-417 (VEKKRETSMD…VSQIIMEKST (78 aa)) is integrase-binding domain (IBD). S434 is modified (phosphoserine). T437 is subject to Phosphothreonine. S443 is modified (phosphoserine). Residues 446 to 473 (EQRQHEEANKTKDQGKKGPNKKLDKEQT) are compositionally biased toward basic and acidic residues. The tract at residues 446 to 530 (EQRQHEEANK…ISLKDSTLDN (85 aa)) is disordered. Residues 474 to 494 (GSKTLNGGSDAPDSNQAQHNG) are compositionally biased toward polar residues. Residues 498–530 (EESKDKHEASSKKKPSNEERETEISLKDSTLDN) are compositionally biased toward basic and acidic residues. R517 is modified (citrulline). Phosphoserine is present on S522. Phosphothreonine is present on T527.

The protein belongs to the HDGF family. Monomer. Interacts with IFRD1/PC4. Interacts (via IBD domain) with POGZ (via IBM motif) and CDCA7L (via IBM motifs). Interacts (via IBD domain) with KMT2A (via IBM motifs) with a moderate affinity whereas interacts with the KMT2A-MEN1 complex with a greater affinity; MEN1 enhances interaction of KMT2A with PSIP1. Interacts (via IBD domain) with IWS1 (via IBM motif), MED1 (via IBM motif) and DBF4 (via IBM motifs). As to quaternary structure, (Microbial infection) Interacts (via IBD domain) with feline immunodeficiency virus (FIV) integrase (IN), determining its nuclear localization, its tight association with chromatin and its protection from the proteasome. Citrullinated by PADI4.

The protein localises to the nucleus. Its function is as follows. Transcriptional coactivator involved in neuroepithelial stem cell differentiation and neurogenesis. Involved in particular in lens epithelial cell gene regulation and stress responses. May play an important role in lens epithelial to fiber cell terminal differentiation. May play a protective role during stress-induced apoptosis. The protein is PC4 and SFRS1-interacting protein (PSIP1) of Felis catus (Cat).